Reading from the N-terminus, the 419-residue chain is Adenylosuccinate synthetase 1 (419 aa).

11-17 lines the GTP pocket; the sequence is GDEGKGK. Aspartate 12 functions as the Proton acceptor in the catalytic mechanism. 2 residues coordinate Mg(2+): aspartate 12 and glycine 39. Residues 12–15, 37–40, arginine 138, glutamine 220, and arginine 298 contribute to the IMP site; these read DEGK and NAGH. Histidine 40 serves as the catalytic Proton donor. A substrate-binding site is contributed by 294-300; it reads TVSKRPR. GTP-binding positions include arginine 300, 326–328, and 407–409; these read NVD and SYG.

Belongs to the adenylosuccinate synthetase family. In terms of assembly, homodimer. The cofactor is Mg(2+).

The protein resides in the cytoplasm. It carries out the reaction IMP + L-aspartate + GTP = N(6)-(1,2-dicarboxyethyl)-AMP + GDP + phosphate + 2 H(+). Its pathway is purine metabolism; AMP biosynthesis via de novo pathway; AMP from IMP: step 1/2. Functionally, plays an important role in the de novo pathway of purine nucleotide biosynthesis. Catalyzes the first committed step in the biosynthesis of AMP from IMP. This is Adenylosuccinate synthetase 1 from Photorhabdus laumondii subsp. laumondii (strain DSM 15139 / CIP 105565 / TT01) (Photorhabdus luminescens subsp. laumondii).